An 85-amino-acid chain; its full sequence is Exodeoxyribonuclease 7 small subunit (85 aa).

This sequence belongs to the XseB family. As to quaternary structure, heterooligomer composed of large and small subunits.

It is found in the cytoplasm. It catalyses the reaction Exonucleolytic cleavage in either 5'- to 3'- or 3'- to 5'-direction to yield nucleoside 5'-phosphates.. Its function is as follows. Bidirectionally degrades single-stranded DNA into large acid-insoluble oligonucleotides, which are then degraded further into small acid-soluble oligonucleotides. In Mycobacterium bovis (strain ATCC BAA-935 / AF2122/97), this protein is Exodeoxyribonuclease 7 small subunit.